Consider the following 219-residue polypeptide: ATP-dependent Clp protease proteolytic subunit 3 (219 aa).

Serine 112 acts as the Nucleophile in catalysis. Histidine 137 is an active-site residue.

Belongs to the peptidase S14 family. Fourteen ClpP subunits assemble into 2 heptameric rings which stack back to back to give a disk-like structure with a central cavity, resembling the structure of eukaryotic proteasomes.

Its subcellular location is the cytoplasm. It carries out the reaction Hydrolysis of proteins to small peptides in the presence of ATP and magnesium. alpha-casein is the usual test substrate. In the absence of ATP, only oligopeptides shorter than five residues are hydrolyzed (such as succinyl-Leu-Tyr-|-NHMec, and Leu-Tyr-Leu-|-Tyr-Trp, in which cleavage of the -Tyr-|-Leu- and -Tyr-|-Trp bonds also occurs).. In terms of biological role, cleaves peptides in various proteins in a process that requires ATP hydrolysis. Has a chymotrypsin-like activity. Plays a major role in the degradation of misfolded proteins. This chain is ATP-dependent Clp protease proteolytic subunit 3, found in Streptomyces avermitilis (strain ATCC 31267 / DSM 46492 / JCM 5070 / NBRC 14893 / NCIMB 12804 / NRRL 8165 / MA-4680).